We begin with the raw amino-acid sequence, 534 residues long: Endoglucanase 5 (534 aa).

A signal peptide spans 1 to 27 (MSDVSGRFVVAAAVVAVSLAMAAAAAA). D82 acts as the Nucleophile in catalysis. Catalysis depends on residues H432, D484, and E493. The segment at 515 to 534 (RRRGEDAPPSSTSPVAEDDL) is disordered.

This sequence belongs to the glycosyl hydrolase 9 (cellulase E) family.

It localises to the secreted. It carries out the reaction Endohydrolysis of (1-&gt;4)-beta-D-glucosidic linkages in cellulose, lichenin and cereal beta-D-glucans.. This is Endoglucanase 5 from Oryza sativa subsp. japonica (Rice).